The sequence spans 37 residues: Photosystem I reaction center subunit VIII (37 aa).

Residues 7–27 traverse the membrane as a helical segment; sequence LPSIFVPLVGLVFPAIAMASL.

Belongs to the PsaI family.

The protein localises to the plastid. It localises to the chloroplast thylakoid membrane. In terms of biological role, may help in the organization of the PsaL subunit. The chain is Photosystem I reaction center subunit VIII from Populus alba (White poplar).